We begin with the raw amino-acid sequence, 621 residues long: E3 SUMO-protein ligase PIAS2 (621 aa).

The SAP domain occupies 11 to 45 (VSSFRVSELQVLLGFAGRNKSGRKHDLLMRALHLL). An LXXLL motif motif is present at residues 19–23 (LQVLL). Residues Lys46 and Lys249 each participate in a glycyl lysine isopeptide (Lys-Gly) (interchain with G-Cter in SUMO2) cross-link. Residues 134 to 299 (QPSPPIPPVH…SMSVYLVRQL (166 aa)) form the PINIT domain. The SP-RING-type zinc finger occupies 331-412 (PDSEIATTSL…FMEILNDCSD (82 aa)). Zn(2+)-binding residues include Cys362, His364, Cys385, and Cys388. Glycyl lysine isopeptide (Lys-Gly) (interchain with G-Cter in SUMO2) cross-links involve residues Lys430, Lys435, Lys443, and Lys452. Residues 467–473 (IDVIDLT) form an SUMO1-binding region. Phosphoserine occurs at positions 476, 477, and 478. The Nuclear localization signal signature appears at 484–492 (PPAKRKCIF). Lys489 participates in a covalent cross-link: Glycyl lysine isopeptide (Lys-Gly) (interchain with G-Cter in SUMO2). Position 499 is a phosphoserine (Ser499). Lys502 is covalently cross-linked (Glycyl lysine isopeptide (Lys-Gly) (interchain with G-Cter in SUMO2)). The segment covering 577-610 (TASSTSVTTTSPHESSTHVSSSSSRSETGVITSS) has biased composition (low complexity). Residues 577–621 (TASSTSVTTTSPHESSTHVSSSSSRSETGVITSSGRNIPDIISLD) form a disordered region.

This sequence belongs to the PIAS family. In terms of assembly, binds SUMO1 and UBE2I. Interacts with AXIN1, JUN, MDM2, PARK7, TP53 and TP73 isoform alpha, but not TP73 isoform beta. Interacts with STAT4 following IL12 and IFN-alpha stimulation of T-cells. Interacts also with GTF2I, GTF2IRD1, IKFZ1, DAB2 and MSX2, as well as with several steroid receptors, including ESR1, ESR2, NR3C1, PGR, AR, and with NCOA2. Sumoylation of a target protein seems to enhance the interaction. Binds to sumoylated ELK1. Interacts with PLAG1. Binds DNA, such as CDKN1A promoter, in a sequence-specific manner. Interacts with KLF8; the interaction results in SUMO ligation and repression of KLF8 transcriptional activity and of its cell cycle progression into G(1) phase. Interacts with IFIH1/MDA5. Interacts with PML. Interacts with PRDM1. Post-translationally, sumoylated.

The protein resides in the nucleus speckle. Its subcellular location is the nucleus. It localises to the PML body. It catalyses the reaction S-ubiquitinyl-[E2 ubiquitin-conjugating enzyme]-L-cysteine + [acceptor protein]-L-lysine = [E2 ubiquitin-conjugating enzyme]-L-cysteine + N(6)-ubiquitinyl-[acceptor protein]-L-lysine.. Its pathway is protein modification; protein sumoylation. Functionally, functions as an E3-type small ubiquitin-like modifier (SUMO) ligase, stabilizing the interaction between UBE2I and the substrate, and as a SUMO-tethering factor. Plays a crucial role as a transcriptional coregulation in various cellular pathways, including the STAT pathway, the p53 pathway and the steroid hormone signaling pathway. The effects of this transcriptional coregulation, transactivation or silencing may vary depending upon the biological context and PIAS2 isoform studied. However, it seems to be mostly involved in gene silencing. Binds to sumoylated ELK1 and enhances its transcriptional activity by preventing recruitment of HDAC2 by ELK1, thus reversing SUMO-mediated repression of ELK1 transactivation activity. Isoform PIASx-beta, but not isoform PIASx-alpha, promotes MDM2 sumoylation. Isoform PIASx-alpha promotes PARK7 sumoylation. Isoform PIASx-beta promotes NCOA2 sumoylation more efficiently than isoform PIASx-alpha. Sumoylates PML at'Lys-65' and 'Lys-160'. The chain is E3 SUMO-protein ligase PIAS2 (Pias2) from Mus musculus (Mouse).